Reading from the N-terminus, the 133-residue chain is Small ribosomal subunit protein uS8 (133 aa).

It belongs to the universal ribosomal protein uS8 family. As to quaternary structure, part of the 30S ribosomal subunit. Contacts proteins S5 and S12.

Functionally, one of the primary rRNA binding proteins, it binds directly to 16S rRNA central domain where it helps coordinate assembly of the platform of the 30S subunit. The chain is Small ribosomal subunit protein uS8 from Cyanothece sp. (strain PCC 7425 / ATCC 29141).